The sequence spans 599 residues: Beta-(1--&gt;2)glucan export ATP-binding/permease protein NdvA (599 aa).

Positions 21–301 (TITMCVASVL…ISAFINQTVT (281 aa)) constitute an ABC transmembrane type-1 domain. The next 5 helical transmembrane spans lie at 22–42 (ITMC…PVLF), 55–75 (IFSP…AAVF), 156–176 (MRMS…GQLV), 248–268 (MAST…VTKG), and 276–296 (IAFI…SAFI). One can recognise an ABC transporter domain in the interval 335–569 (IVFDNVTYEF…GGRFSDLLRA (235 aa)). 368–375 (GPTGAGKT) lines the ATP pocket.

This sequence belongs to the ABC transporter superfamily. Beta-(1--&gt;2)glucan exporter (TC 3.A.1.108.1) family. As to quaternary structure, homodimer.

The protein localises to the cell inner membrane. The catalysed reaction is [(1-&gt;2)-beta-D-glucosyl](n)(in) + ATP + H2O = [(1-&gt;2)-beta-D-glucosyl](n)(out) + ADP + phosphate + H(+). Its function is as follows. Involved in beta-(1--&gt;2)glucan export. Its export to the periplasmic space is required to exert its action as a virulence factor. Transmembrane domains (TMD) form a pore in the inner membrane and the ATP-binding domain (NBD) is responsible for energy generation. The protein is Beta-(1--&gt;2)glucan export ATP-binding/permease protein NdvA of Brucella abortus (strain 2308).